The sequence spans 340 residues: Glycerol-3-phosphate dehydrogenase [NAD(P)+] (340 aa).

NADPH contacts are provided by Ser-13, Trp-14, and Lys-108. Residues Lys-108, Gly-139, and Ser-141 each contribute to the sn-glycerol 3-phosphate site. Ala-143 contributes to the NADPH binding site. Residues Lys-194, Asp-247, Ser-257, Arg-258, and Asn-259 each coordinate sn-glycerol 3-phosphate. Lys-194 acts as the Proton acceptor in catalysis. Residue Arg-258 participates in NADPH binding. Residues Val-282 and Glu-284 each coordinate NADPH.

Belongs to the NAD-dependent glycerol-3-phosphate dehydrogenase family.

It localises to the cytoplasm. The enzyme catalyses sn-glycerol 3-phosphate + NAD(+) = dihydroxyacetone phosphate + NADH + H(+). It catalyses the reaction sn-glycerol 3-phosphate + NADP(+) = dihydroxyacetone phosphate + NADPH + H(+). It participates in membrane lipid metabolism; glycerophospholipid metabolism. Catalyzes the reduction of the glycolytic intermediate dihydroxyacetone phosphate (DHAP) to sn-glycerol 3-phosphate (G3P), the key precursor for phospholipid synthesis. The chain is Glycerol-3-phosphate dehydrogenase [NAD(P)+] from Streptococcus thermophilus (strain CNRZ 1066).